A 156-amino-acid chain; its full sequence is Arginine repressor (156 aa).

Belongs to the ArgR family.

Its subcellular location is the cytoplasm. It participates in amino-acid biosynthesis; L-arginine biosynthesis [regulation]. Regulates arginine biosynthesis genes. The protein is Arginine repressor of Shewanella woodyi (strain ATCC 51908 / MS32).